The sequence spans 139 residues: Large ribosomal subunit protein uL16c (139 aa).

The protein belongs to the universal ribosomal protein uL16 family. As to quaternary structure, part of the 50S ribosomal subunit.

It localises to the plastid. The protein resides in the chloroplast. The protein is Large ribosomal subunit protein uL16c of Cryptomeria japonica (Japanese cedar).